Reading from the N-terminus, the 1947-residue chain is DNA-directed RNA polymerase subunit beta' (1947 aa).

Zn(2+) contacts are provided by Cys-119, Cys-121, Cys-141, and Cys-144. The Mg(2+) site is built by Asp-1778, Asp-1780, and Asp-1782.

Belongs to the RNA polymerase beta' chain family. RpoC1 subfamily. In plastids the minimal PEP RNA polymerase catalytic core is composed of four subunits: alpha, beta, beta', and beta''. When a (nuclear-encoded) sigma factor is associated with the core the holoenzyme is formed, which can initiate transcription. Mg(2+) serves as cofactor. The cofactor is Zn(2+).

The protein resides in the plastid. It is found in the chloroplast. It catalyses the reaction RNA(n) + a ribonucleoside 5'-triphosphate = RNA(n+1) + diphosphate. In terms of biological role, DNA-dependent RNA polymerase catalyzes the transcription of DNA into RNA using the four ribonucleoside triphosphates as substrates. This is DNA-directed RNA polymerase subunit beta' from Oedogonium cardiacum (Filamentous green alga).